A 727-amino-acid polypeptide reads, in one-letter code: MIVKSLSLLALAAATVEGCVRERDVGSVDILSVLSKRGHGHPHLPHLSKYESMLINSFDNTTVDSWAYYYTHGIHIAGTNQSMAQWTADKWTEFGIPSSLVSYDVYLNYPVSHSLSLTHPDGTTWEASLVEDVLKEDDTTSYPDRIPTFHGYSASGEATAEYVYVGRGQKVDFERLIQLGVDLKGKIAIARYGGPFRGLKVKNAQDQGMIGCIIFTDPADDGNVTVANGLKAYPNGPARNPSAVQRGSVQFLSMFPGDPTTPGYPSRPDSPRKDKSPVVPKIPSIPISQLDAQPILAALDGHGTPGKEVNRTRWVGALNATYATGPAPGAKLSMSNVMRDTYTPIWNSIGIINGTEQDEVVIIGNHRDAWIIGGAGDPNSGSSIMVELAKAFGKLQKAGWKPKRTIVMCSWDAEEYGLVGSTEWVEEYLPWLKASAVAYLNIDVAVSGPVPDLSATPELHKLALESMKKVIWPYKGRQDTTMYDVWNTASGGEVGVLGSGSDYTAFVHNGIASLDTGAGGDGNTDPVYHYHSNYDSYHWMATYGDPGFHTHVAMGQFLGLLGYHLATDDIIPFDVTNYGVQMTKYLDVLKKYIAASKFPDLDVSKIESAICSFNVSANAVAKLQKKAEHNVHDQQLRKHLNTIYRDFGRGFVSQGGLPDREFYRHMLYAPGLDTGYAPTTFPGVTESLDAGNRTRAVEYIERASNAIYVAAGILSSCHDCNQFVAQE.

The signal sequence occupies residues 1–18 (MIVKSLSLLALAAATVEG). N-linked (GlcNAc...) asparagine glycans are attached at residues asparagine 60 and asparagine 80. Residues 158–296 (ATAEYVYVGR…ISQLDAQPIL (139 aa)) form the PA domain. Arginine 197 is a substrate binding site. N-linked (GlcNAc...) asparagine glycosylation is present at asparagine 223. The interval 255–279 (FPGDPTTPGYPSRPDSPRKDKSPVV) is disordered. 2 residues coordinate Ca(2+): threonine 261 and tyrosine 264. The interval 266 to 565 (SRPDSPRKDK…QFLGLLGYHL (300 aa)) is NAALADase. Residues asparagine 310, asparagine 319, and asparagine 353 are each glycosylated (N-linked (GlcNAc...) asparagine). Zn(2+) is bound at residue histidine 366. The active-site For NAALADase activity is the glutamate 414. A Zn(2+)-binding site is contributed by glutamate 415. Ca(2+)-binding residues include glutamate 423 and glutamate 426. Aspartate 443 is a binding site for Zn(2+). Substrate-binding positions include 516–518 (TGA) and tyrosine 530. Histidine 531 provides a ligand contact to Zn(2+). The active-site Charge relay system is the serine 604. N-linked (GlcNAc...) asparagine glycosylation occurs at asparagine 614. Histidine 665 serves as the catalytic Charge relay system. 675–676 (GY) lines the substrate pocket. Asparagine 692 carries N-linked (GlcNAc...) asparagine glycosylation.

Belongs to the peptidase M28 family. M28B subfamily. The cofactor is Zn(2+).

The protein localises to the secreted. The catalysed reaction is Release of an unsubstituted, C-terminal glutamyl residue, typically from Ac-Asp-Glu or folylpoly-gamma-glutamates.. Functionally, has both folate hydrolase and N-acetylated-alpha-linked-acidic dipeptidase (NAALADase) activity. Also exhibits a dipeptidyl-peptidase IV type activity. In Arthroderma benhamiae (strain ATCC MYA-4681 / CBS 112371) (Trichophyton mentagrophytes), this protein is Probable glutamate carboxypeptidase ARB_02390.